The primary structure comprises 419 residues: UDP-N-acetylglucosamine 1-carboxyvinyltransferase 2 (419 aa).

22 to 23 (KN) provides a ligand contact to phosphoenolpyruvate. R92 is a binding site for UDP-N-acetyl-alpha-D-glucosamine. C116 serves as the catalytic Proton donor. A 2-(S-cysteinyl)pyruvic acid O-phosphothioketal modification is found at C116. Residues 121-125 (RPIDL), D306, and I328 contribute to the UDP-N-acetyl-alpha-D-glucosamine site.

This sequence belongs to the EPSP synthase family. MurA subfamily.

The protein localises to the cytoplasm. The enzyme catalyses phosphoenolpyruvate + UDP-N-acetyl-alpha-D-glucosamine = UDP-N-acetyl-3-O-(1-carboxyvinyl)-alpha-D-glucosamine + phosphate. It participates in cell wall biogenesis; peptidoglycan biosynthesis. In terms of biological role, cell wall formation. Adds enolpyruvyl to UDP-N-acetylglucosamine. This is UDP-N-acetylglucosamine 1-carboxyvinyltransferase 2 from Streptococcus pyogenes serotype M3 (strain ATCC BAA-595 / MGAS315).